The primary structure comprises 280 residues: Probable S-methyl-5'-thioinosine phosphorylase (280 aa).

Phosphate-binding positions include threonine 8 and 50–51 (RH). Residue methionine 175 participates in substrate binding. Phosphate is bound at residue threonine 176. 199 to 201 (NYA) is a binding site for substrate.

Belongs to the PNP/MTAP phosphorylase family. MTAP subfamily. Homotrimer.

It carries out the reaction S-methyl-5'-thioinosine + phosphate = 5-(methylsulfanyl)-alpha-D-ribose 1-phosphate + hypoxanthine. Its pathway is purine metabolism; purine nucleoside salvage. In terms of biological role, catalyzes the reversible phosphorylation of S-methyl-5'-thioinosine (MTI) to hypoxanthine and 5-methylthioribose-1-phosphate. Involved in the breakdown of S-methyl-5'-thioadenosine (MTA), a major by-product of polyamine biosynthesis. Catabolism of (MTA) occurs via deamination to MTI and phosphorolysis to hypoxanthine. This Methanothermobacter thermautotrophicus (strain ATCC 29096 / DSM 1053 / JCM 10044 / NBRC 100330 / Delta H) (Methanobacterium thermoautotrophicum) protein is Probable S-methyl-5'-thioinosine phosphorylase.